A 152-amino-acid chain; its full sequence is Snaclec coagulation factor IX/factor X-binding protein subunit A (152 aa).

The signal sequence occupies residues 1–23 (MGRFIFLSFGLLVVFLSLSGTGA). Intrachain disulfides connect C25–C36, C53–C150, and C125–C142. A C-type lectin domain is found at 32 to 151 (YEGHCYNIFH…CGERNPFVCE (120 aa)). Ca(2+) contacts are provided by S64, E66, and E70. E151 contacts Ca(2+).

It belongs to the snaclec family. Heterodimer of subunits A and B; disulfide-linked. In terms of tissue distribution, expressed by the venom gland.

It is found in the secreted. Anticoagulant protein which binds to the gamma-carboxyglutamic acid-domain regions of factors IX (F9) and factor X (F10) in the presence of calcium with a 1 to 1 stoichiometry. The chain is Snaclec coagulation factor IX/factor X-binding protein subunit A from Gloydius halys (Chinese water mocassin).